The sequence spans 580 residues: Proline--tRNA ligase (580 aa).

It belongs to the class-II aminoacyl-tRNA synthetase family. ProS type 1 subfamily. Homodimer.

Its subcellular location is the cytoplasm. It carries out the reaction tRNA(Pro) + L-proline + ATP = L-prolyl-tRNA(Pro) + AMP + diphosphate. Catalyzes the attachment of proline to tRNA(Pro) in a two-step reaction: proline is first activated by ATP to form Pro-AMP and then transferred to the acceptor end of tRNA(Pro). As ProRS can inadvertently accommodate and process non-cognate amino acids such as alanine and cysteine, to avoid such errors it has two additional distinct editing activities against alanine. One activity is designated as 'pretransfer' editing and involves the tRNA(Pro)-independent hydrolysis of activated Ala-AMP. The other activity is designated 'posttransfer' editing and involves deacylation of mischarged Ala-tRNA(Pro). The misacylated Cys-tRNA(Pro) is not edited by ProRS. The sequence is that of Proline--tRNA ligase from Maridesulfovibrio salexigens (strain ATCC 14822 / DSM 2638 / NCIMB 8403 / VKM B-1763) (Desulfovibrio salexigens).